The following is a 179-amino-acid chain: Protein LDB18 (179 aa).

In terms of biological role, may be involved in protein-linked oligosaccharide phosphorylation since the deletion reduces the negative charge of the cell surface. This Saccharomyces cerevisiae (strain ATCC 204508 / S288c) (Baker's yeast) protein is Protein LDB18 (LDB18).